A 354-amino-acid chain; its full sequence is Falstatin (354 aa).

An N-terminal signal peptide occupies residues M1–C21. A BC loop; binds and inhibits the active site cavity of cysteine proteases motif is present at residues L226–W236. The segment at K274–R317 is disordered. Basic and acidic residues predominate over residues Y275–P302.

It belongs to the protease inhibitor I71 family. As to quaternary structure, oligomer; probably composed of 10 monomers. During the liver stage, proteolytically cleaved.

The protein localises to the secreted. Its subcellular location is the cytoplasmic vesicle. The protein resides in the secretory vesicle. It is found in the microneme. It localises to the host cytoplasm. The protein localises to the parasitophorous vacuole lumen. In terms of biological role, cysteine protease inhibitor. Required for the invasion of host erythrocytes by merozoites. In the mosquito vector, essential for the gliding motility of hemocoel sporozoites and, therefore, for salivary gland invasion and the subsequent transmission from the mosquito to the mammalian host. Required for the invasion of host hepatocytes. During the liver stage, may prevent host hepatocyte cell death likely by inhibiting host cysteine proteases. This chain is Falstatin, found in Plasmodium berghei (strain Anka).